The sequence spans 146 residues: Large-conductance mechanosensitive channel (146 aa).

3 consecutive transmembrane segments (helical) span residues 17 to 37 (IDLA…DSLV), 40 to 60 (IIMP…QKFV), and 89 to 109 (LTIL…VKLI).

This sequence belongs to the MscL family. Homopentamer.

Its subcellular location is the cell inner membrane. Its function is as follows. Channel that opens in response to stretch forces in the membrane lipid bilayer. May participate in the regulation of osmotic pressure changes within the cell. This is Large-conductance mechanosensitive channel from Acinetobacter baylyi (strain ATCC 33305 / BD413 / ADP1).